Reading from the N-terminus, the 238-residue chain is Heme oxygenase 1 (238 aa).

The protein belongs to the heme oxygenase family.

It catalyses the reaction heme b + 3 reduced [NADPH--hemoprotein reductase] + 3 O2 = biliverdin IXalpha + CO + Fe(2+) + 3 oxidized [NADPH--hemoprotein reductase] + 3 H2O + H(+). Functionally, catalyzes the opening of the heme ring with the release of iron. Key enzyme in the synthesis of the chromophoric part of the photosynthetic antennae. Upon overexpression in E.coli with PCB:ferredoxin oxidoreductase, CpeS and either CpcB or PecB permits synthesis of phycocyanin-coupled CpcB or PecB. The sequence is that of Heme oxygenase 1 (pbsA1) from Nostoc sp. (strain PCC 7120 / SAG 25.82 / UTEX 2576).